Here is a 209-residue protein sequence, read N- to C-terminus: MSSQYSNVENLSPQTIRQVMRELQEMETTPPEGIKVLINESDVTDIQALIDGPAGTPYAAGIFRVKLTLNKDFPQTPPKAYFLTKIFHPNVAANGEICVNTLKKDWKPDLGIKHILLTIKCLLIVPNPESALNEEAGKMLLERYDDYSQRARMMTEIHAQPAKCAAGAAGDSKDDDGPSTKKHAGLDKKLQDKKKEKLLKEKKRMLKRL.

The region spanning 14-160 (QTIRQVMREL…ARMMTEIHAQ (147 aa)) is the UBC core domain. The active-site Glycyl thioester intermediate is cysteine 98. Positions 164 to 209 (CAAGAAGDSKDDDGPSTKKHAGLDKKLQDKKKEKLLKEKKRMLKRL) are disordered. Positions 171–199 (DSKDDDGPSTKKHAGLDKKLQDKKKEKLL) are enriched in basic and acidic residues. Residues 200 to 209 (KEKKRMLKRL) are compositionally biased toward basic residues.

It belongs to the ubiquitin-conjugating enzyme family.

The enzyme catalyses S-ubiquitinyl-[E1 ubiquitin-activating enzyme]-L-cysteine + [E2 ubiquitin-conjugating enzyme]-L-cysteine = [E1 ubiquitin-activating enzyme]-L-cysteine + S-ubiquitinyl-[E2 ubiquitin-conjugating enzyme]-L-cysteine.. The protein operates within protein modification; protein ubiquitination. Catalyzes the covalent attachment of ubiquitin to other proteins. Acts as an essential factor of the anaphase promoting complex/cyclosome (APC/C), a cell cycle-regulated ubiquitin ligase that controls progression through mitosis. Acts by specifically elongating polyubiquitin chains initiated by the E2 enzyme vih/UbcH10 on APC/C substrates, enhancing the degradation of APC/C substrates by the proteasome and promoting mitotic exit. The chain is Ubiquitin-conjugating enzyme E2 S from Drosophila ananassae (Fruit fly).